Here is a 304-residue protein sequence, read N- to C-terminus: Secreted mono- and diacylglycerol lipase MDL3 (304 aa).

Residues 1 to 19 (MIVGPVISLLLSYFVLVSG) form the signal peptide. Cysteine 55 and cysteine 297 form a disulfide bridge. An N-linked (GlcNAc...) asparagine glycan is attached at asparagine 161. Serine 171 serves as the catalytic Nucleophile. Catalysis depends on residues aspartate 228 and histidine 281.

Belongs to the AB hydrolase superfamily. Lipase family. Class 3 subfamily.

The protein localises to the secreted. The protein resides in the cell wall. The enzyme catalyses a monoacylglycerol + H2O = glycerol + a fatty acid + H(+). It carries out the reaction a diacylglycerol + H2O = a monoacylglycerol + a fatty acid + H(+). In terms of biological role, secreted lipase involved in Dandruff and seborrheic dermatitis (D/SD) probably via lipase-mediated breakdown of sebaceous lipids and release of irritating free fatty acids. Shows activity against monoglyceride and diglyceride substrates, but not triglyceride substrates and does not exhibit regio-selective production of diacylglycerols. Hydrolyzes distearin, dilinolein, dipalmitoylglycerol and dipalmitolein. Cleaves oleic acid from 1,2 isomers of diolein on both the 1 and the 2 position of the glycerol backbone, resulting mainly in free fatty acids but no monoolein is detected. Shows activity on monoolein and liberates mostly free fatty acids, but can also perform the reverse reaction and produce diolein. The polypeptide is Secreted mono- and diacylglycerol lipase MDL3 (Malassezia globosa (strain ATCC MYA-4612 / CBS 7966) (Dandruff-associated fungus)).